The following is a 440-amino-acid chain: Chromosomal replication initiator protein DnaA (440 aa).

The segment at 1 to 69 (MKERILQEIK…VKVVLGNDAT (69 aa)) is domain I, interacts with DnaA modulators. A domain II region spans residues 69–96 (TFEITYEAFEPHSSYSEPLVKKRAVLLT). Residues 97–313 (PLNPDYTFEN…GAIIKLLVYK (217 aa)) form a domain III, AAA+ region region. 4 residues coordinate ATP: Gly-140, Gly-142, Lys-143, and Thr-144. The segment at 314 to 440 (ETTGKEVDLK…GEISRRALSG (127 aa)) is domain IV, binds dsDNA.

The protein belongs to the DnaA family. As to quaternary structure, oligomerizes as a right-handed, spiral filament on DNA at oriC.

It is found in the cytoplasm. Plays an essential role in the initiation and regulation of chromosomal replication. ATP-DnaA binds to the origin of replication (oriC) to initiate formation of the DNA replication initiation complex once per cell cycle. Binds the DnaA box (a 9 base pair repeat at the origin) and separates the double-stranded (ds)DNA. Forms a right-handed helical filament on oriC DNA; dsDNA binds to the exterior of the filament while single-stranded (ss)DNA is stabiized in the filament's interior. The ATP-DnaA-oriC complex binds and stabilizes one strand of the AT-rich DNA unwinding element (DUE), permitting loading of DNA polymerase. After initiation quickly degrades to an ADP-DnaA complex that is not apt for DNA replication. Binds acidic phospholipids. The protein is Chromosomal replication initiator protein DnaA of Thermotoga sp. (strain RQ2).